Reading from the N-terminus, the 324-residue chain is tRNA dimethylallyltransferase (324 aa).

17-24 (GPTASGKT) contacts ATP. 19-24 (TASGKT) contributes to the substrate binding site. Interaction with substrate tRNA stretches follow at residues 42 to 45 (DSAL), 166 to 170 (QRIQR), 251 to 256 (RCVGYR), and 284 to 291 (KRQITWLR).

The protein belongs to the IPP transferase family. In terms of assembly, monomer. Requires Mg(2+) as cofactor.

It catalyses the reaction adenosine(37) in tRNA + dimethylallyl diphosphate = N(6)-dimethylallyladenosine(37) in tRNA + diphosphate. Catalyzes the transfer of a dimethylallyl group onto the adenine at position 37 in tRNAs that read codons beginning with uridine, leading to the formation of N6-(dimethylallyl)adenosine (i(6)A). This chain is tRNA dimethylallyltransferase, found in Burkholderia orbicola (strain MC0-3).